Consider the following 332-residue polypeptide: Lipoyl synthase (332 aa).

Positions 74, 79, 85, 100, 104, 107, and 314 each coordinate [4Fe-4S] cluster. Positions 85 to 303 (CFGKGTATFM…EEEAYKMGFT (219 aa)) constitute a Radical SAM core domain.

Belongs to the radical SAM superfamily. Lipoyl synthase family. The cofactor is [4Fe-4S] cluster.

It localises to the cytoplasm. The enzyme catalyses [[Fe-S] cluster scaffold protein carrying a second [4Fe-4S](2+) cluster] + N(6)-octanoyl-L-lysyl-[protein] + 2 oxidized [2Fe-2S]-[ferredoxin] + 2 S-adenosyl-L-methionine + 4 H(+) = [[Fe-S] cluster scaffold protein] + N(6)-[(R)-dihydrolipoyl]-L-lysyl-[protein] + 4 Fe(3+) + 2 hydrogen sulfide + 2 5'-deoxyadenosine + 2 L-methionine + 2 reduced [2Fe-2S]-[ferredoxin]. Its pathway is protein modification; protein lipoylation via endogenous pathway; protein N(6)-(lipoyl)lysine from octanoyl-[acyl-carrier-protein]: step 2/2. Its function is as follows. Catalyzes the radical-mediated insertion of two sulfur atoms into the C-6 and C-8 positions of the octanoyl moiety bound to the lipoyl domains of lipoate-dependent enzymes, thereby converting the octanoylated domains into lipoylated derivatives. In Paracidovorax citrulli (strain AAC00-1) (Acidovorax citrulli), this protein is Lipoyl synthase.